Here is a 382-residue protein sequence, read N- to C-terminus: Adenosine 3'-phospho 5'-phosphosulfate transporter 2 (382 aa).

Residues M1–G10 are compositionally biased toward polar residues. The segment at M1–E33 is disordered. 10 helical membrane-spanning segments follow: residues L56–F76, P83–E103, V121–L141, P144–I164, G170–A190, N197–G217, V234–G254, F271–L291, L299–F319, and F323–Y343.

This sequence belongs to the nucleotide-sugar transporter family. SLC35B subfamily.

The protein resides in the golgi apparatus membrane. In terms of biological role, mediates the transport of adenosine 3'-phospho 5'-phosphosulfate (PAPS), from cytosol into Golgi. PAPS is a universal sulfuryl donor for sulfation events that take place in the Golgi. Essential for viability. Involved in glycosaminoglycan synthesis and the subsequent signaling. May be involved in hh and dpp signaling by controlling the sulfation of heparan sulfate (HS). This chain is Adenosine 3'-phospho 5'-phosphosulfate transporter 2, found in Aedes aegypti (Yellowfever mosquito).